We begin with the raw amino-acid sequence, 546 residues long: Probable protein kinase UbiB (546 aa).

Positions 124–502 (DFEIKPLASA…HVRQGQSRYF (379 aa)) constitute a Protein kinase domain. Residues 130 to 138 (LASASIAQV) and Lys153 each bind ATP. Asp288 acts as the Proton acceptor in catalysis. A run of 2 helical transmembrane segments spans residues 501–521 (YFLG…VSRP) and 522–542 (EWGL…FVGW).

The protein belongs to the ABC1 family. UbiB subfamily.

It localises to the cell inner membrane. The protein operates within cofactor biosynthesis; ubiquinone biosynthesis [regulation]. Its function is as follows. Is probably a protein kinase regulator of UbiI activity which is involved in aerobic coenzyme Q (ubiquinone) biosynthesis. The sequence is that of Probable protein kinase UbiB from Escherichia coli O45:K1 (strain S88 / ExPEC).